Reading from the N-terminus, the 432-residue chain is Myb family transcription factor EFM (432 aa).

Residues 36-81 adopt a coiled-coil conformation; that stretch reads LEDLLSRLEQERLKIDAFKRELPLCMQLLNNAVEVYKQQLEAYRAN. Composition is skewed to polar residues over residues 123 to 139 and 187 to 197; these read SQSE…TDQS and SPTNEHTNGQD. The segment at 123–237 is disordered; the sequence is SQSETKPKNI…SQSNRKARRC (115 aa). The span at 201–231 shows a compositional bias: low complexity; that stretch reads ESMINNDNNYNNNNNNNSNSNGVSSTTSQSN. The 61-residue stretch at 230–290 folds into the HTH myb-type domain; sequence SNRKARRCWS…HLQKYRLHTR (61 aa). The segment at residues 261–286 is a DNA-binding region (H-T-H motif); the sequence is PKQIRELMKVDGLTNDEVKSHLQKYR. The segment at 354 to 412 is disordered; the sequence is FYTTPPPPQPLHHHHFQTFNGSSGGTASTDSTHHQVTDSPTVEGKSPESGGGERKGLAA.

Interacts with JMJ30, but not with SVP, FLC or CO. As to expression, specifically expressed in vascular tissues of cotyledons, rosette leaves and cauline leaves. Not detected in the vegetative shoot apical meristem.

The protein localises to the nucleus. Transcription factor acting as a flowering repressor, directly repressing FT expression in a dosage-dependent manner in the leaf vasculature. In Arabidopsis thaliana (Mouse-ear cress), this protein is Myb family transcription factor EFM.